Consider the following 312-residue polypeptide: Malate dehydrogenase (312 aa).

NAD(+)-binding positions include 7–13 and Asp-34; that span reads GAAGGIG. The substrate site is built by Arg-81 and Arg-87. Residues Asn-94 and 117 to 119 each bind NAD(+); that span reads ITN. Substrate contacts are provided by Asn-119 and Arg-153. His-177 functions as the Proton acceptor in the catalytic mechanism. Residue Met-227 coordinates NAD(+).

This sequence belongs to the LDH/MDH superfamily. MDH type 1 family. In terms of assembly, homodimer.

It catalyses the reaction (S)-malate + NAD(+) = oxaloacetate + NADH + H(+). Its function is as follows. Catalyzes the reversible oxidation of malate to oxaloacetate. This Salmonella agona (strain SL483) protein is Malate dehydrogenase.